The following is a 215-amino-acid chain: Peroxiredoxin (215 aa).

A Thioredoxin domain is found at 6-161 (PLIGEEFPRV…ILRAVKALQT (156 aa)). Catalysis depends on Cys48, which acts as the Cysteine sulfenic acid (-SOH) intermediate. Residue Arg124 participates in substrate binding. The cysteines at positions 205 and 211 are disulfide-linked.

This sequence belongs to the peroxiredoxin family. Prx6 subfamily. As to quaternary structure, homodecamer. Pentamer of dimers that assemble into a ring structure.

The protein resides in the cytoplasm. The enzyme catalyses a hydroperoxide + [thioredoxin]-dithiol = an alcohol + [thioredoxin]-disulfide + H2O. Thiol-specific peroxidase that catalyzes the reduction of hydrogen peroxide and organic hydroperoxides to water and alcohols, respectively. Plays a role in cell protection against oxidative stress by detoxifying peroxides. The sequence is that of Peroxiredoxin from Thermotoga maritima (strain ATCC 43589 / DSM 3109 / JCM 10099 / NBRC 100826 / MSB8).